A 573-amino-acid chain; its full sequence is MQDSHGNTQILNQANSMVKRTWRLLFRIATLILLVSIFVLSLIIVLQSTPGNLQNDINIIRKELNELMENFETTSKSLLSVSNQITYDVSVLTPIRQEAIETNIISKIKDHCKDRVIKEGSTCTLNRSPLHDVSFLNGFNKFYFTYKDNMQIKFKSLLDYPNFIPTATTPHGCIRIPSFSLGQTHWCYTHNINLLGCADPASSNQYVSLGTLQVLKMGDPYFKVEHSHYLNDGRNRKSCSVVAVPDGCLRNCVTMTKNETENFKDLNWQHNYLHTYHIMVPLKTRIINPPGSSRDWVHIAPGVGSGLLYAKLLIFPLYGGLTEKSVIHNNQSGKYFFPNSTKLQCRNSTMEKIKGAKDSYTITYFSGRLIQSAFLVCDLRQFLSEDCEILIPSNDYMMVGAEGRLYNIENNIFYYQRGSSWWPYPSLYRIRLNLSKKYPRITEIKFTKIEIAPRPGNKDCPGNKACPKECITGVYQDILPLSYPNTAFPHLKQAYYTGFYLNNSLERRNPTFYTADNLDYHQQERLGKFNLTAGYSTTTCFKQTTTARLYCLYIIEVGDSVIGDFQITLFLAA.

Topologically, residues 1–27 are intravirion; sequence MQDSHGNTQILNQANSMVKRTWRLLFR. A helical membrane pass occupies residues 28–48; that stretch reads IATLILLVSIFVLSLIIVLQS. The Virion surface portion of the chain corresponds to 49-573; sequence TPGNLQNDIN…DFQITLFLAA (525 aa). Cystine bridges form between cysteine 173–cysteine 197, cysteine 187–cysteine 248, and cysteine 239–cysteine 252. The involved in neuraminidase activity stretch occupies residues 235–240; that stretch reads NRKSCS. 4 N-linked (GlcNAc...) asparagine; by host glycosylation sites follow: asparagine 258, asparagine 330, asparagine 339, and asparagine 347. Disulfide bonds link cysteine 345–cysteine 466, cysteine 377–cysteine 387, and cysteine 460–cysteine 470. An N-linked (GlcNAc...) asparagine; by host glycan is attached at asparagine 433. 2 N-linked (GlcNAc...) asparagine; by host glycosylation sites follow: asparagine 502 and asparagine 530. A disulfide bond links cysteine 540 and cysteine 551.

This sequence belongs to the paramyxoviruses hemagglutinin-neuraminidase family. Homotetramer; composed of disulfide-linked homodimers. Interacts with F protein trimer.

The protein resides in the virion membrane. It localises to the host cell membrane. The catalysed reaction is Hydrolysis of alpha-(2-&gt;3)-, alpha-(2-&gt;6)-, alpha-(2-&gt;8)- glycosidic linkages of terminal sialic acid residues in oligosaccharides, glycoproteins, glycolipids, colominic acid and synthetic substrates.. Its function is as follows. Attaches the virus to sialic acid-containing cell receptors and thereby initiating infection. Binding of HN protein to the receptor induces a conformational change that allows the F protein to trigger virion/cell membranes fusion. Neuraminidase activity ensures the efficient spread of the virus by dissociating the mature virions from the neuraminic acid containing glycoproteins. The polypeptide is Hemagglutinin-neuraminidase (HN) (Homo sapiens (Human)).